Consider the following 509-residue polypeptide: ATP synthase subunit alpha (509 aa).

169 to 176 provides a ligand contact to ATP; that stretch reads GDRQTGKT.

This sequence belongs to the ATPase alpha/beta chains family. As to quaternary structure, F-type ATPases have 2 components, CF(1) - the catalytic core - and CF(0) - the membrane proton channel. CF(1) has five subunits: alpha(3), beta(3), gamma(1), delta(1), epsilon(1). CF(0) has three main subunits: a(1), b(2) and c(9-12). The alpha and beta chains form an alternating ring which encloses part of the gamma chain. CF(1) is attached to CF(0) by a central stalk formed by the gamma and epsilon chains, while a peripheral stalk is formed by the delta and b chains.

It is found in the cell inner membrane. The enzyme catalyses ATP + H2O + 4 H(+)(in) = ADP + phosphate + 5 H(+)(out). In terms of biological role, produces ATP from ADP in the presence of a proton gradient across the membrane. The alpha chain is a regulatory subunit. In Parvibaculum lavamentivorans (strain DS-1 / DSM 13023 / NCIMB 13966), this protein is ATP synthase subunit alpha.